The following is a 194-amino-acid chain: dCTP deaminase, dUMP-forming (194 aa).

Residues 105-110, D123, 131-133, Q152, Y166, K174, and Q178 contribute to the dCTP site; these read RSSMGR and TLE. Residue E133 is the Proton donor/acceptor of the active site.

Belongs to the dCTP deaminase family. Homotrimer.

The enzyme catalyses dCTP + 2 H2O = dUMP + NH4(+) + diphosphate. The protein operates within pyrimidine metabolism; dUMP biosynthesis; dUMP from dCTP: step 1/1. In terms of biological role, bifunctional enzyme that catalyzes both the deamination of dCTP to dUTP and the hydrolysis of dUTP to dUMP without releasing the toxic dUTP intermediate. This is dCTP deaminase, dUMP-forming from Methanobrevibacter smithii (strain ATCC 35061 / DSM 861 / OCM 144 / PS).